The chain runs to 162 residues: 2-C-methyl-D-erythritol 2,4-cyclodiphosphate synthase (162 aa).

Positions 9 and 11 each coordinate a divalent metal cation. 4-CDP-2-C-methyl-D-erythritol 2-phosphate-binding positions include 9 to 11 (DFH) and 37 to 38 (HS). Residue H45 coordinates a divalent metal cation. 4-CDP-2-C-methyl-D-erythritol 2-phosphate is bound by residues 59-61 (DIG), 64-68 (FPDTD), 135-138 (TTSE), and R145.

It belongs to the IspF family. In terms of assembly, homotrimer. A divalent metal cation is required as a cofactor.

It carries out the reaction 4-CDP-2-C-methyl-D-erythritol 2-phosphate = 2-C-methyl-D-erythritol 2,4-cyclic diphosphate + CMP. The protein operates within isoprenoid biosynthesis; isopentenyl diphosphate biosynthesis via DXP pathway; isopentenyl diphosphate from 1-deoxy-D-xylulose 5-phosphate: step 4/6. Involved in the biosynthesis of isopentenyl diphosphate (IPP) and dimethylallyl diphosphate (DMAPP), two major building blocks of isoprenoid compounds. Catalyzes the conversion of 4-diphosphocytidyl-2-C-methyl-D-erythritol 2-phosphate (CDP-ME2P) to 2-C-methyl-D-erythritol 2,4-cyclodiphosphate (ME-CPP) with a corresponding release of cytidine 5-monophosphate (CMP). The sequence is that of 2-C-methyl-D-erythritol 2,4-cyclodiphosphate synthase from Leptospira biflexa serovar Patoc (strain Patoc 1 / Ames).